A 609-amino-acid polypeptide reads, in one-letter code: Arginine--tRNA ligase (609 aa).

The 'HIGH' region signature appears at 114–124 (VNPNKELHVGH).

It belongs to the class-I aminoacyl-tRNA synthetase family. Monomer.

It is found in the cytoplasm. The catalysed reaction is tRNA(Arg) + L-arginine + ATP = L-arginyl-tRNA(Arg) + AMP + diphosphate. The polypeptide is Arginine--tRNA ligase (Deinococcus radiodurans (strain ATCC 13939 / DSM 20539 / JCM 16871 / CCUG 27074 / LMG 4051 / NBRC 15346 / NCIMB 9279 / VKM B-1422 / R1)).